We begin with the raw amino-acid sequence, 211 residues long: C-type lectin domain-containing protein 158 (211 aa).

The first 16 residues, 1–16 (MQKFILSAFVVALVAA), serve as a signal peptide directing secretion.

The polypeptide is C-type lectin domain-containing protein 158 (clec-158) (Caenorhabditis elegans).